A 571-amino-acid chain; its full sequence is Exodeoxyribonuclease 1 (571 aa).

The tract at residues 1 to 96 is N-domain; that stretch reads MGIKGLLGLL…STEQKRKERR (96 aa). Residues D30, D78, E150, D152, D171, D173, and D225 each coordinate Mg(2+). Residues 114–245 are I-domain; the sequence is QAIMQFSRCV…KTALRYLQKY (132 aa). 2 disordered regions span residues 464–489 and 530–559; these read KEID…SASP and RKNH…NPRP. Over residues 470–489 the composition is skewed to polar residues; it reads VPSQSNNTTPTSAKSDSASP.

Belongs to the XPG/RAD2 endonuclease family. EXO1 subfamily. Monomer. Requires Mg(2+) as cofactor.

Its subcellular location is the nucleus. 5'-&gt;3' double-stranded DNA exonuclease that could act in a pathway that corrects mismatched base pairs. In Schizosaccharomyces pombe (strain 972 / ATCC 24843) (Fission yeast), this protein is Exodeoxyribonuclease 1 (exo1).